The chain runs to 534 residues: Pentatricopeptide repeat-containing protein At5g50990 (534 aa).

PPR repeat units lie at residues 128–158 (NVIT…MLSF), 164–198 (NKFS…GIEL), 199–229 (NAIL…VKRN), 230–264 (DVSI…HVSP), 265–295 (DSIT…MSRR), and 301–331 (KLEH…MPIE). A type E motif region spans residues 336–408 (IWRSLLSSSR…AKGKSWLEFG (73 aa)). The interval 409 to 439 (GMIHRFKAGDTSHIETKAIYKVLEGLIQKTK) is type E(+) motif. The tract at residues 440–534 (SQGFVSDTDL…DGLCSCRDYW (95 aa)) is type DYW motif.

This sequence belongs to the PPR family. PCMP-H subfamily.

This chain is Pentatricopeptide repeat-containing protein At5g50990 (PCMP-H59), found in Arabidopsis thaliana (Mouse-ear cress).